A 296-amino-acid chain; its full sequence is Putative S-adenosyl-L-methionine-dependent methyltransferase MAP_3881 (296 aa).

Residues Asp-121 and Asp-150–Leu-151 each bind S-adenosyl-L-methionine.

This sequence belongs to the UPF0677 family.

Exhibits S-adenosyl-L-methionine-dependent methyltransferase activity. This is Putative S-adenosyl-L-methionine-dependent methyltransferase MAP_3881 from Mycolicibacterium paratuberculosis (strain ATCC BAA-968 / K-10) (Mycobacterium paratuberculosis).